The chain runs to 503 residues: Na(+)-translocating NADH-quinone reductase subunit B (503 aa).

A run of 4 helical transmembrane segments spans residues 55–75, 120–142, 161–181, and 186–206; these read MILV…NSGV, IFLP…FAVI, TLPP…GVVV, and FGGT…FLFF. Thr-248 carries the FMN phosphoryl threonine modification. 5 consecutive transmembrane segments (helical) span residues 361 to 381, 387 to 407, 417 to 437, 452 to 472, and 475 to 495; these read TSTF…IASW, FGIG…LIVG, FFIP…LVFM, WIYG…NPAY, and GVML…YFAV.

The protein belongs to the NqrB/RnfD family. In terms of assembly, composed of six subunits; NqrA, NqrB, NqrC, NqrD, NqrE and NqrF. The cofactor is FMN.

It is found in the cell inner membrane. It carries out the reaction a ubiquinone + n Na(+)(in) + NADH + H(+) = a ubiquinol + n Na(+)(out) + NAD(+). In terms of biological role, NQR complex catalyzes the reduction of ubiquinone-1 to ubiquinol by two successive reactions, coupled with the transport of Na(+) ions from the cytoplasm to the periplasm. NqrA to NqrE are probably involved in the second step, the conversion of ubisemiquinone to ubiquinol. In Chlamydia felis (strain Fe/C-56) (Chlamydophila felis), this protein is Na(+)-translocating NADH-quinone reductase subunit B.